Reading from the N-terminus, the 319-residue chain is MNPNYLDFEQPIADLEAKIQDLRTASAGPSVNVDIEVRALENKLRLRTAQIFRNLSAWQISQLARHPRRPYTLDYISIVCDEFQELAGDRTLADDKAIVGGLARIGHRPVMLIGHQKGRDNKERLMRNFGMPKPEGYRKALRLMKLAERFGLPLLTFIDTMGAWPGIDAEERNQSEAIATNLIEMAELKIPVICTVIGEGGSGGALAIGIGDRTLMLEYSTYSVITPEGCASILWKDAAKASDAAEQLNLTARRLKEFGLIDKVIREPIGGAHRNPQQMANRLKAVLLNELEALDKVPLVTLLNQRHKRLRTYGAYENH.

Residues 32-293 (NVDIEVRALE…KAVLLNELEA (262 aa)) form the CoA carboxyltransferase C-terminal domain.

It belongs to the AccA family. As to quaternary structure, acetyl-CoA carboxylase is a heterohexamer composed of biotin carboxyl carrier protein (AccB), biotin carboxylase (AccC) and two subunits each of ACCase subunit alpha (AccA) and ACCase subunit beta (AccD).

It localises to the cytoplasm. It carries out the reaction N(6)-carboxybiotinyl-L-lysyl-[protein] + acetyl-CoA = N(6)-biotinyl-L-lysyl-[protein] + malonyl-CoA. It participates in lipid metabolism; malonyl-CoA biosynthesis; malonyl-CoA from acetyl-CoA: step 1/1. Its function is as follows. Component of the acetyl coenzyme A carboxylase (ACC) complex. First, biotin carboxylase catalyzes the carboxylation of biotin on its carrier protein (BCCP) and then the CO(2) group is transferred by the carboxyltransferase to acetyl-CoA to form malonyl-CoA. This is Acetyl-coenzyme A carboxylase carboxyl transferase subunit alpha from Xylella fastidiosa (strain Temecula1 / ATCC 700964).